The primary structure comprises 1002 residues: Lon protease homolog, mitochondrial (1002 aa).

In terms of domain architecture, Lon N-terminal spans 102-313; the sequence is VIALPLPHRP…LTLELVKKEM (212 aa). 468-475 contacts ATP; the sequence is GPPGVGKT. Positions 811–995 constitute a Lon proteolytic domain; sequence QTPVGVVMGL…NEIFDIAFQS (185 aa). Residues serine 901 and lysine 944 contribute to the active site.

It belongs to the peptidase S16 family. Homohexamer or homoheptamer. Organized in a ring with a central cavity.

The protein resides in the mitochondrion matrix. The enzyme catalyses Hydrolysis of proteins in presence of ATP.. ATP-dependent serine protease that mediates the selective degradation of misfolded, unassembled or oxidatively damaged polypeptides as well as certain short-lived regulatory proteins in the mitochondrial matrix. May also have a chaperone function in the assembly of inner membrane protein complexes. Participates in the regulation of mitochondrial gene expression and in the maintenance of the integrity of the mitochondrial genome. Binds to mitochondrial DNA in a site-specific manner. This Oryza sativa subsp. indica (Rice) protein is Lon protease homolog, mitochondrial.